A 125-amino-acid chain; its full sequence is Protein ELF4-LIKE 1 (125 aa).

Over residues 1–18 the composition is skewed to polar residues; sequence MEASRNRSLVGNNRSPEM. Residues 1–28 form a disordered region; it reads MEASRNRSLVGNNRSPEMNENDGEDVAA.

This sequence belongs to the EARLY FLOWERING 4 family. As to quaternary structure, homodimer.

It is found in the nucleus. In terms of biological role, component of the central CCA1/LHY-TOC1 feedback loop in the circadian clock that promotes clock accuracy and is required for sustained rhythms in the absence of daily light/dark cycles. The sequence is that of Protein ELF4-LIKE 1 (EFL1) from Arabidopsis thaliana (Mouse-ear cress).